The sequence spans 414 residues: Putative competence-damage inducible protein (414 aa).

The protein belongs to the CinA family.

This is Putative competence-damage inducible protein from Clostridium novyi (strain NT).